A 243-amino-acid polypeptide reads, in one-letter code: Max-interacting protein 1 (243 aa).

Positions histidine 76 to leucine 128 constitute a bHLH domain. Residues glutamate 164 to cysteine 235 are disordered. Positions aspartate 188–serine 198 are enriched in acidic residues. Over residues serine 222–cysteine 235 the composition is skewed to polar residues.

Efficient DNA binding requires dimerization with another bHLH protein. Binds DNA as a heterodimer with MAX.

The protein resides in the nucleus. Transcriptional repressor. MXI1 binds with MAX to form a sequence-specific DNA-binding protein complex which recognizes the core sequence 5'-CAC[GA]TG-3'. MXI1 thus antagonizes MYC transcriptional activity by competing for MAX. The chain is Max-interacting protein 1 (mxi1) from Danio rerio (Zebrafish).